The chain runs to 299 residues: ATP phosphoribosyltransferase (299 aa).

Belongs to the ATP phosphoribosyltransferase family. Long subfamily. Requires Mg(2+) as cofactor.

It is found in the cytoplasm. It catalyses the reaction 1-(5-phospho-beta-D-ribosyl)-ATP + diphosphate = 5-phospho-alpha-D-ribose 1-diphosphate + ATP. It functions in the pathway amino-acid biosynthesis; L-histidine biosynthesis; L-histidine from 5-phospho-alpha-D-ribose 1-diphosphate: step 1/9. Feedback inhibited by histidine. Functionally, catalyzes the condensation of ATP and 5-phosphoribose 1-diphosphate to form N'-(5'-phosphoribosyl)-ATP (PR-ATP). Has a crucial role in the pathway because the rate of histidine biosynthesis seems to be controlled primarily by regulation of HisG enzymatic activity. This chain is ATP phosphoribosyltransferase, found in Campylobacter jejuni subsp. jejuni serotype O:6 (strain 81116 / NCTC 11828).